A 404-amino-acid chain; its full sequence is Glucose-1-phosphate adenylyltransferase (404 aa).

Residues Y99, G164, 179-180 (EK), and S197 contribute to the alpha-D-glucose 1-phosphate site.

Belongs to the bacterial/plant glucose-1-phosphate adenylyltransferase family.

The enzyme catalyses alpha-D-glucose 1-phosphate + ATP + H(+) = ADP-alpha-D-glucose + diphosphate. The protein operates within glycan biosynthesis; glycogen biosynthesis. In terms of biological role, involved in the biosynthesis of ADP-glucose, a building block, required in the biosynthesis of maltose-1-phosphate (M1P) and in the elongation reactions to produce linear alpha-1,4-glucans. Catalyzes the reaction between ATP and alpha-D-glucose 1-phosphate (G1P) to produce pyrophosphate and ADP-Glc. The sequence is that of Glucose-1-phosphate adenylyltransferase from Mycolicibacterium vanbaalenii (strain DSM 7251 / JCM 13017 / BCRC 16820 / KCTC 9966 / NRRL B-24157 / PYR-1) (Mycobacterium vanbaalenii).